Consider the following 337-residue polypeptide: N-acetyl-gamma-glutamyl-phosphate reductase (337 aa).

Residue C145 is part of the active site.

Belongs to the NAGSA dehydrogenase family. Type 1 subfamily.

The protein localises to the cytoplasm. The enzyme catalyses N-acetyl-L-glutamate 5-semialdehyde + phosphate + NADP(+) = N-acetyl-L-glutamyl 5-phosphate + NADPH + H(+). It functions in the pathway amino-acid biosynthesis; L-arginine biosynthesis; N(2)-acetyl-L-ornithine from L-glutamate: step 3/4. In terms of biological role, catalyzes the NADPH-dependent reduction of N-acetyl-5-glutamyl phosphate to yield N-acetyl-L-glutamate 5-semialdehyde. In Methanosarcina barkeri (strain Fusaro / DSM 804), this protein is N-acetyl-gamma-glutamyl-phosphate reductase.